We begin with the raw amino-acid sequence, 356 residues long: Histidinol-phosphate aminotransferase 2 (356 aa).

An N6-(pyridoxal phosphate)lysine modification is found at Lys213.

It belongs to the class-II pyridoxal-phosphate-dependent aminotransferase family. Histidinol-phosphate aminotransferase subfamily. Homodimer. The cofactor is pyridoxal 5'-phosphate.

It carries out the reaction L-histidinol phosphate + 2-oxoglutarate = 3-(imidazol-4-yl)-2-oxopropyl phosphate + L-glutamate. It participates in amino-acid biosynthesis; L-histidine biosynthesis; L-histidine from 5-phospho-alpha-D-ribose 1-diphosphate: step 7/9. This Burkholderia mallei (strain ATCC 23344) protein is Histidinol-phosphate aminotransferase 2.